The chain runs to 482 residues: Glutamyl-tRNA(Gln) amidotransferase subunit A (482 aa).

Catalysis depends on charge relay system residues Lys75 and Ser150. Ser174 serves as the catalytic Acyl-ester intermediate.

Belongs to the amidase family. GatA subfamily. Heterotrimer of A, B and C subunits.

It catalyses the reaction L-glutamyl-tRNA(Gln) + L-glutamine + ATP + H2O = L-glutaminyl-tRNA(Gln) + L-glutamate + ADP + phosphate + H(+). Functionally, allows the formation of correctly charged Gln-tRNA(Gln) through the transamidation of misacylated Glu-tRNA(Gln) in organisms which lack glutaminyl-tRNA synthetase. The reaction takes place in the presence of glutamine and ATP through an activated gamma-phospho-Glu-tRNA(Gln). The sequence is that of Glutamyl-tRNA(Gln) amidotransferase subunit A from Acaryochloris marina (strain MBIC 11017).